The sequence spans 288 residues: Protease HtpX (288 aa).

The next 2 helical transmembrane spans lie at 4-24 (VMLFLITNLAVVLVLSVVLNI) and 36-56 (LSGLLVMAAVFGFGGAFISLM). Position 143 (H143) interacts with Zn(2+). E144 is a catalytic residue. A Zn(2+)-binding site is contributed by H147. The next 2 helical transmembrane spans lie at 151–171 (GDMVTMTLMQGVVNTFVIFLS) and 193–213 (MVYFAVSIALELVFGFLASFI). E222 serves as a coordination point for Zn(2+).

It belongs to the peptidase M48B family. Zn(2+) serves as cofactor.

It localises to the cell inner membrane. This Vibrio vulnificus (strain YJ016) protein is Protease HtpX.